The sequence spans 512 residues: GMP synthase [glutamine-hydrolyzing] (512 aa).

A Glutamine amidotransferase type-1 domain is found at 7–197 (TIIVLDFGSQ…VFGVCGCSEG (191 aa)). The active-site Nucleophile is cysteine 84. Active-site residues include histidine 171 and glutamate 173. The 190-residue stretch at 198–387 (WNMENFIEVE…LGIPDEIVWR (190 aa)) folds into the GMPS ATP-PPase domain. 225 to 231 (SGGVDSS) serves as a coordination point for ATP.

As to quaternary structure, homodimer.

The enzyme catalyses XMP + L-glutamine + ATP + H2O = GMP + L-glutamate + AMP + diphosphate + 2 H(+). It functions in the pathway purine metabolism; GMP biosynthesis; GMP from XMP (L-Gln route): step 1/1. Functionally, catalyzes the synthesis of GMP from XMP. In Bacillus anthracis, this protein is GMP synthase [glutamine-hydrolyzing].